A 166-amino-acid chain; its full sequence is Endoribonuclease YbeY (166 aa).

Positions 125, 129, and 135 each coordinate Zn(2+).

This sequence belongs to the endoribonuclease YbeY family. Zn(2+) serves as cofactor.

It is found in the cytoplasm. Single strand-specific metallo-endoribonuclease involved in late-stage 70S ribosome quality control and in maturation of the 3' terminus of the 16S rRNA. The sequence is that of Endoribonuclease YbeY from Alkalilimnicola ehrlichii (strain ATCC BAA-1101 / DSM 17681 / MLHE-1).